Consider the following 160-residue polypeptide: MRVAIYPGSFDPVTYGHIDIIKRGANLFDKLIVAVLLNPAKRPLFSIQERIELLKEVTKDIPNVEVDYFDGLLVEYAKKVNASAIIKGLRMVSDFEYEFQMALVNKKLNPSVETIFLMTSPKYGYLSSSLVKEIAQFGGCLSEFVPDIVAERLMEKFKKS.

Residue serine 9 coordinates substrate. Residues 9 to 10 and histidine 17 each bind ATP; that span reads SF. Substrate is bound by residues lysine 41, leucine 73, and lysine 87. ATP is bound by residues 88-90, glutamate 98, and 123-129; these read GLR and YGYLSSS.

The protein belongs to the bacterial CoaD family. As to quaternary structure, homohexamer. Mg(2+) is required as a cofactor.

The protein resides in the cytoplasm. It catalyses the reaction (R)-4'-phosphopantetheine + ATP + H(+) = 3'-dephospho-CoA + diphosphate. It participates in cofactor biosynthesis; coenzyme A biosynthesis; CoA from (R)-pantothenate: step 4/5. Reversibly transfers an adenylyl group from ATP to 4'-phosphopantetheine, yielding dephospho-CoA (dPCoA) and pyrophosphate. This is Phosphopantetheine adenylyltransferase from Caldanaerobacter subterraneus subsp. tengcongensis (strain DSM 15242 / JCM 11007 / NBRC 100824 / MB4) (Thermoanaerobacter tengcongensis).